A 589-amino-acid polypeptide reads, in one-letter code: Zinc finger protein 703 (589 aa).

The interval Ser-102 to Pro-315 is disordered. Positions Ser-113–Ser-122 are enriched in low complexity. Positions Ser-137–Ser-148 are enriched in basic and acidic residues. Residues Asn-179–Thr-188 show a composition bias toward polar residues. Over residues Ser-196–Ser-206 the composition is skewed to low complexity. Polar residues predominate over residues Gln-214–His-230. Residues Gly-237 to Asp-250 show a composition bias toward low complexity. Basic and acidic residues predominate over residues Arg-251–Ser-262. A compositionally biased stretch (low complexity) spans Ser-272–Gln-299. The required for interaction with Groucho and hdac2 plays an important role in repression of transcription stretch occupies residues Val-408–Leu-460. The C2H2-type zinc-finger motif lies at His-462–His-490. The interval Gly-498 to Gln-589 is required for self-association and nuclear localization.

Belongs to the Elbow/Noc family. Self-associates. Interacts with nlz2. May interact with Groucho corepressor proteins.

Its subcellular location is the nucleus. It localises to the cytoplasm. In terms of biological role, transcriptional corepressor which does not bind directly to DNA and may regulate transcription through recruitment of histone deacetylases to gene promoters. Required for segmental gene expression during hindbrain development. May regulate cell adhesion, migration and proliferation. The sequence is that of Zinc finger protein 703 (znf703) from Danio rerio (Zebrafish).